A 117-amino-acid chain; its full sequence is Prefoldin subunit beta (117 aa).

The protein belongs to the prefoldin subunit beta family. As to quaternary structure, heterohexamer of two alpha and four beta subunits.

It is found in the cytoplasm. Functionally, molecular chaperone capable of stabilizing a range of proteins. Seems to fulfill an ATP-independent, HSP70-like function in archaeal de novo protein folding. In Pyrococcus abyssi (strain GE5 / Orsay), this protein is Prefoldin subunit beta (pfdB).